Reading from the N-terminus, the 647-residue chain is DNA mismatch repair protein MutL (647 aa).

The protein belongs to the DNA mismatch repair MutL/HexB family.

This protein is involved in the repair of mismatches in DNA. It is required for dam-dependent methyl-directed DNA mismatch repair. May act as a 'molecular matchmaker', a protein that promotes the formation of a stable complex between two or more DNA-binding proteins in an ATP-dependent manner without itself being part of a final effector complex. This is DNA mismatch repair protein MutL from Bacillus thuringiensis subsp. konkukian (strain 97-27).